The chain runs to 734 residues: Myb-like protein J (734 aa).

3 disordered regions span residues 1–35 (MPNNQQNQIESPSKNTSNVGGSTLLNNNSPPFKSN), 128–196 (QKDQ…PTMM), and 221–378 (SPIS…LKQG). Residues 131-142 (QQQKEQQKEQQK) show a composition bias toward basic and acidic residues. The segment covering 164–173 (TTTTTTTTTT) has biased composition (low complexity). The span at 174 to 196 (AVEQQGAEQQDTNLNSTSSPTMM) shows a compositional bias: polar residues. Positions 221 to 230 (SPISSSLNNS) are enriched in low complexity. Residues 231–257 (QDNTKPVSPDNIENTSNPMDTSSSNGK) show a composition bias toward polar residues. The segment covering 258 to 372 (TPTITPIVTP…GGKTNPTGKK (115 aa)) has biased composition (low complexity). The region spanning 371–426 (KKTSLKQGWTKEEHIRFLNGIQIHGKGAWKEIAQFVGTRTPTQIQSHAQKYYLRQK) is the HTH myb-type domain. A DNA-binding region (H-T-H motif) is located at residues 399–422 (WKEIAQFVGTRTPTQIQSHAQKYY). The span at 445 to 454 (DDNLNNSNKN) shows a compositional bias: low complexity. The disordered stretch occupies residues 445-623 (DDNLNNSNKN…GNILRHQNSH (179 aa)). The span at 455-468 (NVDKNKQDDKEKKT) shows a compositional bias: basic and acidic residues. A compositionally biased stretch (basic residues) spans 469 to 478 (QKTKKTKSKS). Composition is skewed to low complexity over residues 489-543 (QQQQ…SSQT) and 574-615 (NNNN…NEGN).

The protein resides in the nucleus. The protein is Myb-like protein J (mybJ) of Dictyostelium discoideum (Social amoeba).